The chain runs to 514 residues: Mitochondrial-processing peptidase subunit alpha (514 aa).

A mitochondrion-targeting transit peptide spans 1-55 (MLLRKSIPYIKICRDISASVRNNKEIAQKLPLSVPLPMENNSKSIEKGCPPMGRN).

The protein belongs to the peptidase M16 family. Heterodimer of mppa-1 (alpha) and mppb-1 (beta) subunits, forming the mitochondrial processing protease (MPP) in which mppa-1 is involved in substrate recognition and binding and mppb-1 is the catalytic subunit.

It is found in the mitochondrion matrix. Substrate recognition and binding subunit of the essential mitochondrial processing protease (MPP), which cleaves the mitochondrial sequence off newly imported precursors proteins. The polypeptide is Mitochondrial-processing peptidase subunit alpha (Caenorhabditis elegans).